A 217-amino-acid chain; its full sequence is Protein dao-4 (217 aa).

The signal sequence occupies residues 1–21; that stretch reads MKIALYSILLITVCYLSSTDA.

It localises to the nucleus. The protein localises to the secreted. Probably acts downstream of the Wnt signaling pathway. The chain is Protein dao-4 from Caenorhabditis elegans.